The primary structure comprises 251 residues: UDP-N-acetylglucosamine--dolichyl-phosphate N-acetylglucosaminyltransferase (251 aa).

The chain crosses the membrane as a helical span at residues 150–167 (VGNLGLSFITFLLGGYYV).

This sequence belongs to the glycosyltransferase 2 family.

The protein localises to the cell membrane. It carries out the reaction a di-trans,poly-cis-dolichyl phosphate + UDP-N-acetyl-alpha-D-glucosamine = an N-acetyl-alpha-D-glucosaminyl-phospho-di-trans,poly-cis-dolichol + UDP. It functions in the pathway cell surface structure biogenesis; S-layer biogenesis. The protein operates within protein modification; protein glycosylation. In terms of biological role, involved in the assembly of an N-linked disaccharide that decorates the S-layer glycoprotein and flagellins. AglK initiates N-linked glycosylation through the formation of alpha-linked dolichyl monophosphate N-acetylglucosamine. It catalyzes the transfer of GlcNAc from the donor substrate UDP-GlcNAc to dolichyl phosphate C55 (Dol-P) to yield Dol-P-GlcNAc. AglK reaction proceeds with retention of stereochemistry. The reaction is specific for UDP-GlcNAc. AglK shows a stronger preference for short dolichol (C55-60 Dol-P) substrates compared with the longer (C85-105 Dol-P). The sequence is that of UDP-N-acetylglucosamine--dolichyl-phosphate N-acetylglucosaminyltransferase from Methanococcus voltae.